Here is a 63-residue protein sequence, read N- to C-terminus: Cytochrome c oxidase subunit 7C, mitochondrial (63 aa).

Residues 1 to 16 (MLGQSIRRFTTSVVRR) constitute a mitochondrion transit peptide. Over 17–33 (SHYEEGPGKNLPFSVEN) the chain is Mitochondrial matrix. N6-acetyllysine; alternate is present on Lys-25. Residue Lys-25 is modified to N6-succinyllysine; alternate. A helical transmembrane segment spans residues 34–60 (KWRLLLMMTVYFGSGFAAPFFIVRHQL). Over 61–63 (LKK) the chain is Mitochondrial intermembrane.

This sequence belongs to the cytochrome c oxidase VIIc family. As to quaternary structure, component of the cytochrome c oxidase (complex IV, CIV), a multisubunit enzyme composed of 14 subunits. The complex is composed of a catalytic core of 3 subunits MT-CO1, MT-CO2 and MT-CO3, encoded in the mitochondrial DNA, and 11 supernumerary subunits COX4I, COX5A, COX5B, COX6A, COX6B, COX6C, COX7A, COX7B, COX7C, COX8 and NDUFA4, which are encoded in the nuclear genome. The complex exists as a monomer or a dimer and forms supercomplexes (SCs) in the inner mitochondrial membrane with NADH-ubiquinone oxidoreductase (complex I, CI) and ubiquinol-cytochrome c oxidoreductase (cytochrome b-c1 complex, complex III, CIII), resulting in different assemblies (supercomplex SCI(1)III(2)IV(1) and megacomplex MCI(2)III(2)IV(2)). Interacts with RAB5IF.

It localises to the mitochondrion inner membrane. Its pathway is energy metabolism; oxidative phosphorylation. In terms of biological role, component of the cytochrome c oxidase, the last enzyme in the mitochondrial electron transport chain which drives oxidative phosphorylation. The respiratory chain contains 3 multisubunit complexes succinate dehydrogenase (complex II, CII), ubiquinol-cytochrome c oxidoreductase (cytochrome b-c1 complex, complex III, CIII) and cytochrome c oxidase (complex IV, CIV), that cooperate to transfer electrons derived from NADH and succinate to molecular oxygen, creating an electrochemical gradient over the inner membrane that drives transmembrane transport and the ATP synthase. Cytochrome c oxidase is the component of the respiratory chain that catalyzes the reduction of oxygen to water. Electrons originating from reduced cytochrome c in the intermembrane space (IMS) are transferred via the dinuclear copper A center (CU(A)) of subunit 2 and heme A of subunit 1 to the active site in subunit 1, a binuclear center (BNC) formed by heme A3 and copper B (CU(B)). The BNC reduces molecular oxygen to 2 water molecules using 4 electrons from cytochrome c in the IMS and 4 protons from the mitochondrial matrix. This Rattus norvegicus (Rat) protein is Cytochrome c oxidase subunit 7C, mitochondrial (Cox7c).